A 1071-amino-acid polypeptide reads, in one-letter code: Exportin-1 (1071 aa).

Residues 46-112 (AQEVLTHLKE…KKYVVGLIIK (67 aa)) enclose the Importin N-terminal domain. HEAT repeat units lie at residues 217–240 (QNAPLVHATLETLLRFLNWIPLGY), 241–277 (IFETKLISTLIYKFLNVPMFRNVSLKCLTEIAGVSVS), 354–472 (MLLV…YVDT), 515–553 (RFLVTVIKDLLGLCEQKRGKDNKAIIASNIMYIVGQYPR), 560–597 (KFLKTVVNKLFEFMHETHDGVQDMACDTFIKIAQKCRR), and 602–639 (VQVGEVMPFIDEILNNINTIICDLQPQQVHTFYEAVGY). Positions 327–450 (CTFLKEHGQL…VREFMKDTDS (124 aa)) are necessary for interaction with Ran and nuclear export complex formation. The residue at position 391 (Ser-391) is a Phosphoserine. The segment at 411–481 (TVLSKVRLLM…TEIIMTKKLQ (71 aa)) is necessary for interaction with RANBP3. Lys-446 carries the post-translational modification N6-acetyllysine. The residue at position 448 (Thr-448) is a Phosphothreonine. At Ser-450 the chain carries Phosphoserine. Tyr-454 carries the phosphotyrosine modification. Lys-693 is subject to N6-acetyllysine. HEAT repeat units follow at residues 775–813 (NFVPPLLDAVLIDYQRNVPAAREPEVLSTMAIIVNKLGG), 885–916 (TMRNVADTGLQILFTLLQNVAQEEAAAQSFYQ), and 917–954 (TYFCDILQHIFSVVTDTSHTAGLTMHASILAYMFNLVE). Phosphoserine occurs at positions 966 and 1031. The stretch at 1002–1039 (FSLNQDIPAFKEHLRDFLVQIKEFAGEDTSDLFLEERE) is one HEAT 10 repeat.

This sequence belongs to the exportin family. As to quaternary structure, found in a U snRNA export complex with PHAX/RNUXA, NCBP1/CBP80, NCBP2/CBP20, RAN, XPO1 and m7G-capped RNA. Component of a nuclear export receptor complex composed of KPNB1, RAN, SNUPN and XPO1. Found in a trimeric export complex with SNUPN, RAN and XPO1. Found in a nuclear export complex with RANBP3 and RAN. Found in a 60S ribosomal subunit export complex with NMD3, RAN, XPO1. Interacts with DDX3X, NMD3, NUP42, NUP88, NUP214, RANBP3 and TERT. Interacts with NEMF (via its N-terminus). Interacts with the monomeric form of BIRC5/survivin deacetylated at 'Lys-129'. Interacts with DTNBP1 and SERTAD2; the interactions translocate DTNBP1 and SERTAD2 out of the nucleus. Interacts with ATF2. Interacts with SLC35G1 and STIM1. Interacts with DCAF8. Interacts with CPEB3. Interacts with HAX1. Interacts with BOK; translocates to the cytoplasm. Interacts with HSP90AB1. Interacts with LRPPRC; interacts with LRPPRC alone and also when LRPPRC is in complex with EIF4E and with EIF4E sensitivity element (4ESE)-containing mRNAs to form an EIF4E-dependent mRNA export complex.

Its subcellular location is the cytoplasm. It localises to the nucleus. It is found in the nucleoplasm. The protein localises to the cajal body. The protein resides in the nucleolus. Functionally, mediates the nuclear export of cellular proteins (cargos) bearing a leucine-rich nuclear export signal (NES) and of RNAs. In the nucleus, in association with RANBP3, binds cooperatively to the NES on its target protein and to the GTPase Ran in its active GTP-bound form. Docking of this complex to the nuclear pore complex (NPC) is mediated through binding to nucleoporins. Upon transit of a nuclear export complex into the cytoplasm, disassembling of the complex and hydrolysis of Ran-GTP to Ran-GDP (induced by RANBP1 and RANGAP1, respectively) cause release of the cargo from the export receptor. The directionality of nuclear export is thought to be conferred by an asymmetric distribution of the GTP- and GDP-bound forms of Ran between the cytoplasm and nucleus. Involved in U3 snoRNA transport from Cajal bodies to nucleoli. Binds to late precursor U3 snoRNA bearing a TMG cap. This is Exportin-1 (Xpo1) from Rattus norvegicus (Rat).